The following is a 204-amino-acid chain: Ras-related and estrogen-regulated growth inhibitor-like protein (204 aa).

The tract at residues 1–204 (MNDVKLTVLG…NVFGKRRKSV (204 aa)) is small GTPase-like. Residues 10 to 17 (GGEGTGKS), 57 to 63 (DPCSQPQ), and 122 to 125 (NKQD) each bind GTP.

Belongs to the small GTPase superfamily. Ras family.

It catalyses the reaction GTP + H2O = GDP + phosphate + H(+). Functionally, binds GDP/GTP and may possess intrinsic GTPase activity. This is Ras-related and estrogen-regulated growth inhibitor-like protein (RERGL) from Bos taurus (Bovine).